The chain runs to 104 residues: UPF0235 protein Sfri_2863 (104 aa).

Belongs to the UPF0235 family.

This chain is UPF0235 protein Sfri_2863, found in Shewanella frigidimarina (strain NCIMB 400).